The sequence spans 259 residues: tRNA (guanine-N(7)-)-methyltransferase (259 aa).

Residues Met1 to Pro74 are disordered. Residues Glu91, Glu116, Asn143, and Asp166 each coordinate S-adenosyl-L-methionine. Residue Asp166 is part of the active site. Substrate is bound by residues Lys170, Asp202, and Thr238–Glu241.

The protein belongs to the class I-like SAM-binding methyltransferase superfamily. TrmB family.

It catalyses the reaction guanosine(46) in tRNA + S-adenosyl-L-methionine = N(7)-methylguanosine(46) in tRNA + S-adenosyl-L-homocysteine. It functions in the pathway tRNA modification; N(7)-methylguanine-tRNA biosynthesis. In terms of biological role, catalyzes the formation of N(7)-methylguanine at position 46 (m7G46) in tRNA. The sequence is that of tRNA (guanine-N(7)-)-methyltransferase from Mycobacterium avium (strain 104).